Here is a 306-residue protein sequence, read N- to C-terminus: Sulfate adenylyltransferase subunit 2 (306 aa).

This sequence belongs to the PAPS reductase family. CysD subfamily. As to quaternary structure, heterodimer composed of CysD, the smaller subunit, and CysN.

The enzyme catalyses sulfate + ATP + H(+) = adenosine 5'-phosphosulfate + diphosphate. It participates in sulfur metabolism; hydrogen sulfide biosynthesis; sulfite from sulfate: step 1/3. Its function is as follows. With CysN forms the ATP sulfurylase (ATPS) that catalyzes the adenylation of sulfate producing adenosine 5'-phosphosulfate (APS) and diphosphate, the first enzymatic step in sulfur assimilation pathway. APS synthesis involves the formation of a high-energy phosphoric-sulfuric acid anhydride bond driven by GTP hydrolysis by CysN coupled to ATP hydrolysis by CysD. In Brucella anthropi (strain ATCC 49188 / DSM 6882 / CCUG 24695 / JCM 21032 / LMG 3331 / NBRC 15819 / NCTC 12168 / Alc 37) (Ochrobactrum anthropi), this protein is Sulfate adenylyltransferase subunit 2.